A 614-amino-acid chain; its full sequence is Glucosidase 2 subunit beta (614 aa).

Residues 1-20 form the signal peptide; sequence MGLHTLLLLLLLRISASAAA. N-linked (GlcNAc...) asparagine glycosylation is present at Asn-115. Basic and acidic residues-rich tracts occupy residues 194 to 222, 231 to 272, and 324 to 351; these read EEER…KKAS, QENH…HDPE, and TGEK…HSEE. Residues 194–396 are disordered; sequence EEERLRKEKE…SHESDDEYVD (203 aa). Acidic residues predominate over residues 352-364; sequence THEDESDVPESAE. Positions 372–382 are enriched in basic and acidic residues; the sequence is SEVEDDRHKYD. The segment covering 383–396 has biased composition (acidic residues); the sequence is DEDFSHESDDEYVD. The MRH domain occupies 497-592; that stretch reads DQCFESKEGK…VLSTPALCDE (96 aa). 3 disulfide bridges follow: Cys-499–Cys-512, Cys-549–Cys-578, and Cys-563–Cys-590.

Heterodimer of a catalytic alpha subunit and a beta subunit.

Its subcellular location is the endoplasmic reticulum. It participates in glycan metabolism; N-glycan metabolism. Regulatory subunit of glucosidase II. May be required for defense response elicited by pathogen-associated molecular patterns (PAMPs). The chain is Glucosidase 2 subunit beta from Oryza sativa subsp. indica (Rice).